Consider the following 681-residue polypeptide: Cryptochrome-1 (681 aa).

Positions Met-1 to Ser-489 are CNT1, binds chromophores to sense blue light and mediate CRY dimerization. Positions Gly-12–Leu-141 constitute a Photolyase/cryptochrome alpha/beta domain. A disulfide bridge connects residues Cys-80 and Cys-190. Tyr-235 contributes to the FAD binding site. Residue Asn-238 participates in Mg(2+) binding. Residue Arg-239 coordinates ATP. The Mg(2+) site is built by Lys-241, Ser-244, and Thr-246. Residues Thr-247–Ser-251 and Ser-293 each bind FAD. His-358 is a binding site for Mg(2+). Residues Asp-359 and Asp-390–Asp-392 each bind FAD. Asp-359–Arg-360 contributes to the ATP binding site. ATP is bound at residue Asp-409. The tract at residues Gln-490–Gly-681 is CCT1/CCE1, mediates blue light signaling. 2 disordered regions span residues Arg-525–Ser-598 and Ser-616–Tyr-664. Residues Met-583–Ser-598 are compositionally biased toward polar residues. The residue at position 616 (Ser-616) is a Phosphoserine. Thr-621 bears the Phosphothreonine mark.

This sequence belongs to the DNA photolyase class-1 family. Homodimer. Interacts with ADO1, COP1 and PHYA. Interacts specifically with the dark/far-red (Pr) state of PHYB, but not with the red light-activated (Pfr). Interacts with PIF4 and PIF5 in the nucleus in response to low blue light (LBL). Binds to SPA1 and SPA4 in response to blue light, this interaction prevents SPA1/COP1 complex formation and thus avoid COP1-dependent degradation of the transcription factor HY5 by the proteasome and promotes hypocotyl elongation. Interacts with TCP2. Binding to ATP mediates conformational changes which facilitate flavin binding. Requires FAD as cofactor. (6R)-5,10-methylene-5,6,7,8-tetrahydrofolate is required as a cofactor. Post-translationally, autophosphorylated; in response to blue light and when in complex with FAD cofactor. Kinase activity is optimal in the presence of magnesium ions, about 30 percent of the optimal activity in the presence of manganese ions, but inactive with calcium ions. Adopts an open conformation when phosphorylated upon photoexcitation and thus interacts with signaling partner proteins. In terms of tissue distribution, widely expressed. Expressed in the aerial tissues (e.g. cotyledons and leaf primordia), but not detected in the roots.

Its subcellular location is the cytoplasm. It is found in the nucleus. The protein resides in the PML body. Its activity is regulated as follows. Light exposure induces a conformational change in the C-terminal domain CCT1 required for activity. Photoreceptor that mediates primarily blue light inhibition of hypocotyl elongation and photoperiodic control of floral initiation, and regulates other light responses, including circadian rhythms, tropic growth, stomata opening, guard cell development, root development, bacterial and viral pathogen responses, abiotic stress responses, cell cycles, programmed cell death, apical dominance, fruit and ovule development, seed dormancy, and magnetoreception. Photoexcited cryptochromes interact with signaling partner proteins to alter gene expression at both transcriptional and post-translational levels and, consequently, regulate the corresponding metabolic and developmental programs. Blue-light absorbing flavoprotein that activates reversible flavin photoreduction via an electron transport chain comprising a tryptophan triad (W-324, W-377 and W-400), accompanied by a large conformational change upon photoexcitation, or via an alternative electron transport that involves small metabolites, including NADPH, NADH, and ATP. The half-life of the activated signaling state is about 5 minutes. Also involved in the detection of blue/green ratio in light (shade under leaf canopies) and subsequent adaptations on plant growth and development. In darkness, the dark reoxidation of flavin occurs and leads to inactivated state. Perceives low blue light (LBL) and responds by directly contacting two bHLH transcription factors, PIF4 and PIF5, at chromatin on E-box variant 5'-CA[CT]GTG-3' to promote their activity and stimulate specific gene expression to adapt global physiology (e.g. hypocotyl elongation and hyponastic growth in low blue light). When activated by high-intensity blue light, catalyzes direct enzymatic conversion of molecular oxygen O(2) to reactive oxygen species (ROS) and hydrogen peroxide H(2)O(2) in vitro. ROS accumulation upon activation by blue light leads to cell death in protoplasts. Seems essential for blue-light-triggered and singlet oxygen-mediated programmed cell death (PCD). Required for the induction of nuclear genes encoding photoprotective components by GATA24 and GATA28 in extreme light intensities that exceed the electron utilization capacity of the chloroplast. Involved in shortening the circadian clock period, especially at 27 degrees Celsius, in blue light (BL) and required to maintain clock genes expression rhythm. Mediates blue light-induced gene expression and hypocotyl elongation through the inhibition of COP1-mediated degradation of the transcription factors BIT1 and HY5 and via the activation of anion channels at the plasma membrane, probably via auxin signaling. Required for the hypocotyl hook formation in darkness. Involved in blue light-dependent stomatal opening, CHS gene expression, transpiration, inhibition of stem growth and increase of root growth, probably by regulating abscisic acid (ABA). Prevents lateral roots growth by inhibiting auxin transport. Necessary for shade avoidance syndrome (SAS), characterized by leaf hyponasty and reduced lamina/petiole ratio, when exposed to blue light attenuation. Together with phototropins, involved in phototropism regulation by various blue light fluence; blue light attenuates phototropism in high fluence rates (100 umol.m-2.s-1) but enhances phototropism in low fluence rates (&lt;1.0 umol.m-2.s-1). Required for blue/UV-A wavelengths-mediated inhibition of explants shoot regeneration in vitro (e.g. new shoot apical meristems regeneration from excised cotyledons). Modulates anthocyanin accumulation in a PHYA-dependent manner in far-red-light. Acts as a PHYA/PHYB-dependent modulator of chlorophyll accumulation in red light. Contributes to most blue light deetiolation responses. May act as a chemical magnetoreceptor, via magnetically sensitive kinetics and quantum yields of photo-induced flavin / tryptophan radical pairs. The effect of near-null magnetic field on flowering is altered by changes of blue light cycle and intensity in a CRY1/CRY2-dependent manner. Involved in the strigolactone signaling that regulates hypocotyl growth in response to blue light. Modulates temperature-dependent growth and physiology maintenance, especially at warm ambient temperatures (e.g. 27 degrees Celsius) and in white light and low-light conditions, via HFR1-dependent activity; this process requires PTAC12/HMR/PAP5 (transcriptional transactivator). Its function is as follows. Implicated in promoting R protein-mediated resistance to Pseudomonas syringae pv. tomato (Pst.) DC3000 under continuous light conditions. Promotes systemic acquired resistance (SAR) and PR gene expression triggered by P.syringae. The polypeptide is Cryptochrome-1 (Arabidopsis thaliana (Mouse-ear cress)).